A 55-amino-acid chain; its full sequence is Large ribosomal subunit protein bL33 (55 aa).

The protein belongs to the bacterial ribosomal protein bL33 family.

The polypeptide is Large ribosomal subunit protein bL33 (Acidiphilium cryptum (strain JF-5)).